The sequence spans 188 residues: Dual specificity protein phosphatase 18 (188 aa).

Positions 19 to 160 (GLSQITSSLY…LIHYEFQLFG (142 aa)) constitute a Tyrosine-protein phosphatase domain. A sufficient for mitochondrial localization region spans residues 95–141 (MKQGRTLLHCAAGVSRSAALCLAYLMKYHAMSLLDAHTWTKSCRPII). The Phosphocysteine intermediate role is filled by C104.

Belongs to the protein-tyrosine phosphatase family. Non-receptor class dual specificity subfamily.

The protein resides in the cytoplasm. Its subcellular location is the nucleus. The protein localises to the mitochondrion inner membrane. The catalysed reaction is O-phospho-L-tyrosyl-[protein] + H2O = L-tyrosyl-[protein] + phosphate. It carries out the reaction O-phospho-L-seryl-[protein] + H2O = L-seryl-[protein] + phosphate. It catalyses the reaction O-phospho-L-threonyl-[protein] + H2O = L-threonyl-[protein] + phosphate. Its function is as follows. Can dephosphorylate single and diphosphorylated synthetic MAPK peptides, with preference for the phosphotyrosine and diphosphorylated forms over phosphothreonine. In vitro, dephosphorylates p-nitrophenyl phosphate (pNPP). In Bos taurus (Bovine), this protein is Dual specificity protein phosphatase 18 (DUSP18).